Here is a 57-residue protein sequence, read N- to C-terminus: DNA-directed RNA polymerase subunit Rpo6 (57 aa).

It belongs to the archaeal Rpo6/eukaryotic RPB6 RNA polymerase subunit family. In terms of assembly, part of the RNA polymerase complex.

The protein resides in the cytoplasm. The catalysed reaction is RNA(n) + a ribonucleoside 5'-triphosphate = RNA(n+1) + diphosphate. Functionally, DNA-dependent RNA polymerase (RNAP) catalyzes the transcription of DNA into RNA using the four ribonucleoside triphosphates as substrates. The sequence is that of DNA-directed RNA polymerase subunit Rpo6 from Thermococcus onnurineus (strain NA1).